Reading from the N-terminus, the 444-residue chain is Spermidine/putrescine import ATP-binding protein PotA (444 aa).

The ABC transporter domain occupies 11–332 (ISLVDVDKEF…PVNKWVANFI (322 aa)). ATP is bound at residue 43–50 (GPSGSGKT). The tract at residues 111 to 201 (RIKKKAEEIP…ESFKKKYLTR (91 aa)) is insert.

The protein belongs to the ABC transporter superfamily. Spermidine/putrescine importer (TC 3.A.1.11.1) family. As to quaternary structure, the complex is composed of two ATP-binding proteins (PotA), two transmembrane proteins (PotB and PotC) and a solute-binding protein (PotD).

Its subcellular location is the cell membrane. It catalyses the reaction ATP + H2O + polyamine-[polyamine-binding protein]Side 1 = ADP + phosphate + polyamineSide 2 + [polyamine-binding protein]Side 1.. Its function is as follows. Part of the ABC transporter complex PotABCD involved in spermidine/putrescine import. Responsible for energy coupling to the transport system. The chain is Spermidine/putrescine import ATP-binding protein PotA from Mesomycoplasma hyopneumoniae (strain 232) (Mycoplasma hyopneumoniae).